The chain runs to 439 residues: Guanine deaminase (439 aa).

Zn(2+) contacts are provided by His-82 and His-84. Substrate is bound by residues 84-87, 209-210, 237-240, and Asp-327; these read HYPQ, RF, and HLCE. Residues His-237 and Asp-327 each coordinate Zn(2+).

Belongs to the metallo-dependent hydrolases superfamily. ATZ/TRZ family. Zn(2+) is required as a cofactor.

The catalysed reaction is guanine + H2O + H(+) = xanthine + NH4(+). Its pathway is purine metabolism; guanine degradation; xanthine from guanine: step 1/1. Catalyzes the hydrolytic deamination of guanine, producing xanthine and ammonia. This chain is Guanine deaminase (guaD), found in Escherichia coli (strain K12).